The sequence spans 171 residues: 3-hydroxydecanoyl-[acyl-carrier-protein] dehydratase (171 aa).

His71 is an active-site residue.

This sequence belongs to the thioester dehydratase family. FabA subfamily. As to quaternary structure, homodimer.

Its subcellular location is the cytoplasm. It catalyses the reaction a (3R)-hydroxyacyl-[ACP] = a (2E)-enoyl-[ACP] + H2O. The enzyme catalyses (3R)-hydroxydecanoyl-[ACP] = (2E)-decenoyl-[ACP] + H2O. It carries out the reaction (2E)-decenoyl-[ACP] = (3Z)-decenoyl-[ACP]. Its pathway is lipid metabolism; fatty acid biosynthesis. In terms of biological role, necessary for the introduction of cis unsaturation into fatty acids. Catalyzes the dehydration of (3R)-3-hydroxydecanoyl-ACP to E-(2)-decenoyl-ACP and then its isomerization to Z-(3)-decenoyl-ACP. Can catalyze the dehydratase reaction for beta-hydroxyacyl-ACPs with saturated chain lengths up to 16:0, being most active on intermediate chain length. The chain is 3-hydroxydecanoyl-[acyl-carrier-protein] dehydratase from Hamiltonella defensa subsp. Acyrthosiphon pisum (strain 5AT).